The primary structure comprises 221 residues: Ribosomal RNA small subunit methyltransferase Nep1 (221 aa).

Residues glycine 174, glycine 179, and 196–201 contribute to the S-adenosyl-L-methionine site; that span reads LGEVAM.

It belongs to the class IV-like SAM-binding methyltransferase superfamily. RNA methyltransferase NEP1 family. As to quaternary structure, homodimer.

The catalysed reaction is a pseudouridine in rRNA + S-adenosyl-L-methionine = an N(1)-methylpseudouridine in rRNA + S-adenosyl-L-homocysteine + H(+). In terms of biological role, methyltransferase involved in ribosomal biogenesis. Specifically catalyzes the N1-methylation of the pseudouridine corresponding to position 914 in M.jannaschii 16S rRNA. The protein is Ribosomal RNA small subunit methyltransferase Nep1 of Pyrobaculum arsenaticum (strain DSM 13514 / JCM 11321 / PZ6).